Here is a 132-residue protein sequence, read N- to C-terminus: Small ribosomal subunit protein uS8 (132 aa).

Belongs to the universal ribosomal protein uS8 family. Part of the 30S ribosomal subunit. Contacts proteins S5 and S12.

In terms of biological role, one of the primary rRNA binding proteins, it binds directly to 16S rRNA central domain where it helps coordinate assembly of the platform of the 30S subunit. This Rhodopseudomonas palustris (strain BisB18) protein is Small ribosomal subunit protein uS8.